The primary structure comprises 233 residues: tRNA1(Val) (adenine(37)-N6)-methyltransferase (233 aa).

This sequence belongs to the methyltransferase superfamily. tRNA (adenine-N(6)-)-methyltransferase family.

The protein resides in the cytoplasm. It carries out the reaction adenosine(37) in tRNA1(Val) + S-adenosyl-L-methionine = N(6)-methyladenosine(37) in tRNA1(Val) + S-adenosyl-L-homocysteine + H(+). Specifically methylates the adenine in position 37 of tRNA(1)(Val) (anticodon cmo5UAC). This chain is tRNA1(Val) (adenine(37)-N6)-methyltransferase, found in Shewanella amazonensis (strain ATCC BAA-1098 / SB2B).